We begin with the raw amino-acid sequence, 99 residues long: Beta-2-microglobulin (99 aa).

The region spanning 5-92 (PNVQVYSRHP…KHVTLKEPMT (88 aa)) is the Ig-like C1-type domain. Cysteines 25 and 80 form a disulfide.

This sequence belongs to the beta-2-microglobulin family. As to quaternary structure, heterodimer of an alpha chain and a beta chain. Beta-2-microglobulin is the beta-chain of major histocompatibility complex class I molecules.

Its subcellular location is the secreted. Its function is as follows. Component of the class I major histocompatibility complex (MHC). Involved in the presentation of peptide antigens to the immune system. The chain is Beta-2-microglobulin (B2M) from Oryctolagus cuniculus (Rabbit).